We begin with the raw amino-acid sequence, 442 residues long: Circumsporozoite protein (442 aa).

The signal sequence occupies residues M1–A18. The interval S69–S357 is disordered. Positions D81–D94 are enriched in low complexity. Residues N95–L115 are compositionally biased toward basic and acidic residues. The tract at residues K114 to K121 is required for the binding to heparan sulfate proteoglycans (HSPGs) on the surface of host hepatocytes. The segment at K122 to P126 is region I; contains the proteolytic cleavage site. The segment covering N130 to N318 has biased composition (low complexity). 46 repeat units span residues N134–P137, N138–P141, N142–P145, N146–P149, N150–P153, N154–P157, N158–P161, N162–P165, N166–P169, N170–P173, N174–P177, N178–P181, N182–P185, N186–P189, N190–P193, N194–P197, N198–P201, N202–P205, N206–P209, N210–P213, N214–P217, N218–P221, N222–P225, N226–P229, N230–P233, N234–P237, N238–P241, N242–P245, N246–P249, N250–P253, N254–P257, N258–P261, N262–P265, N266–P269, N270–P273, N274–P277, N278–P281, N282–P285, N286–P289, N290–P293, N294–P297, N298–P301, N302–P305, N306–P309, N310–P313, and N314–P317. Positions N134–P317 are 46 X 4 AA tandem repeats of N-[AV]-[ND]-P. Residues K319–P334 show a composition bias toward polar residues. A compositionally biased stretch (low complexity) spans E340 to E354. The TSP type-1 domain occupies K367–S420. 2 disulfide bridges follow: C379/C414 and C383/C419. O-linked (Fuc) threonine glycosylation is present at T382. C419 is lipidated: GPI-anchor amidated cysteine. Positions S420–N442 are cleaved as a propeptide — removed in mature form.

This sequence belongs to the plasmodium circumsporozoite protein family. In terms of processing, during host cell invasion, proteolytically cleaved at the cell membrane in the region I by a papain-like cysteine protease of parasite origin. Cleavage is triggered by the sporozoite contact with highly sulfated heparan sulfate proteoglycans (HSPGs) present on the host hepatocyte cell surface. Cleavage exposes the TSP type-1 (TSR) domain and is required for productive invasion of host hepatocytes but not for adhesion to the host cell membrane. Cleavage is dispensable for sporozoite development in the oocyst, motility and for traversal of host and vector cells. Post-translationally, O-glycosylated; maybe by POFUT2.

Its subcellular location is the cell membrane. It is found in the cytoplasm. Functionally, essential sporozoite protein. In the mosquito vector, required for sporozoite development in the oocyst, migration through the vector hemolymph and entry into the vector salivary glands. In the vertebrate host, required for sporozoite migration through the host dermis and infection of host hepatocytes. Binds to highly sulfated heparan sulfate proteoglycans (HSPGs) on the surface of host hepatocytes. In terms of biological role, in the vertebrate host, binds to highly sulfated heparan sulfate proteoglycans (HSPGs) on the surface of host hepatocytes and is required for sporozoite invasion of the host hepatocytes. The protein is Circumsporozoite protein of Plasmodium falciparum (isolate Wellcome).